Reading from the N-terminus, the 921-residue chain is Short transient receptor potential channel 3 (921 aa).

The tract at residues 1–73 (MSTKVRKCKE…PPFSHGPDLS (73 aa)) is disordered. The Cytoplasmic portion of the chain corresponds to 1 to 459 (MSTKVRKCKE…KILRSPFMKF (459 aa)). The span at 19–31 (PEEEEDEGEDEGA) shows a compositional bias: acidic residues. ANK repeat units follow at residues 111–140 (AEEE…TLNV), 146–175 (MGQN…LARI), 177–203 (DALL…FAAS), and 232–261 (PDIT…RIER). Glu158 contacts Ca(2+). The helical transmembrane segment at 460 to 477 (VAHAASFIIFLGLLVFNA) threads the bilayer. Residues 478–508 (SDRFEGITTLPNITVTDYPKQIFRVKTTQFT) are Extracellular-facing. An N-linked (GlcNAc...) asparagine glycan is attached at Asn489. Residues 509-527 (WTEMLIMVWVLGMMWSECK) traverse the membrane as a helical segment. Residues Glu525, Glu528, and Asn543 each contribute to the Ca(2+) site. Over 528 to 540 (ELWLEGPREYILQ) the chain is Cytoplasmic. The helical transmembrane segment at 541–562 (LWNVLDFGMLSIFIAAFTARFL) threads the bilayer. At 563 to 606 (AFLQATKAQQYVDSYVQESDLSEVTLPPEIQYFTYARDKWLPSD) the chain is on the extracellular side. A helical membrane pass occupies residues 607–630 (PQIISEGLYAIAVVLSFSRIAYIL). The Cytoplasmic portion of the chain corresponds to 631–649 (PANESFGPLQISLGRTVKD). The stretch at 634–663 (ESFGPLQISLGRTVKDIFKFMVLFIMVFFA) is one ANK 5 repeat. The helical transmembrane segment at 650–673 (IFKFMVLFIMVFFAFMIGMFILYS) threads the bilayer. Over 674–713 (YYLGAKVNAAFTTVEESFKTLFWSIFGLSEVTSVVLKYDH) the chain is Extracellular. The chain crosses the membrane as a helical span at residues 714 to 739 (KFIENIGYVLYGIYNVTMVVVLLNML). Residues 740 to 921 (IAMINSSYQE…KLNPSMLRCE (182 aa)) are Cytoplasmic-facing. The segment at 850 to 870 (QIMKRLIKRYVLKAQVDKEND) is binds to IP3R3. Ca(2+)-binding residues include Glu871, Glu874, Glu876, and Asp883.

This sequence belongs to the transient receptor (TC 1.A.4) family. STrpC subfamily. TRPC3 sub-subfamily. In terms of assembly, homotetramer. Interacts with ITPR1. Interacts with ITPR3. Interacts with MX1. Interacts with RNF24. Interacts with JPH2; the interaction is involved in maintaining Ca(2+) homeostasis in skeletal muscle and is mediated by JPH2 'Ser-165' phosphorylation. As to quaternary structure, interacts with isoform short of TRPC1. As to expression, expressed predominantly in brain and at much lower levels in ovary, colon, small intestine, lung, prostate, placenta and testis.

The protein resides in the cell membrane. The catalysed reaction is Ca(2+)(in) = Ca(2+)(out). Activated by diacylglycerol (DAG) in a membrane-delimited fashion, independently of protein kinase C. Activated by inositol 1,4,5-triphosphate receptors (ITPR) with bound IP3. May be activated by internal calcium store depletion. Inhibited by intracellular Ca(2+). In terms of biological role, forms a receptor-activated non-selective calcium permeant cation channel. Its function is as follows. Forms a receptor-activated non-selective calcium permeant cation channel. May be operated by a phosphatidylinositol second messenger system activated by receptor tyrosine kinases or G-protein coupled receptors. This chain is Short transient receptor potential channel 3 (TRPC3), found in Homo sapiens (Human).